A 164-amino-acid polypeptide reads, in one-letter code: Phosphopantetheine adenylyltransferase (164 aa).

Residue Ser9 participates in substrate binding. ATP contacts are provided by residues 9–10 (SF) and His17. Substrate-binding residues include Lys41, Leu73, and Lys87. Residues 88–90 (GLR), Glu98, and 122–128 (YSYLSSS) each bind ATP.

This sequence belongs to the bacterial CoaD family. Homohexamer. Mg(2+) serves as cofactor.

The protein localises to the cytoplasm. It catalyses the reaction (R)-4'-phosphopantetheine + ATP + H(+) = 3'-dephospho-CoA + diphosphate. It functions in the pathway cofactor biosynthesis; coenzyme A biosynthesis; CoA from (R)-pantothenate: step 4/5. Reversibly transfers an adenylyl group from ATP to 4'-phosphopantetheine, yielding dephospho-CoA (dPCoA) and pyrophosphate. This Rhodococcus erythropolis (strain PR4 / NBRC 100887) protein is Phosphopantetheine adenylyltransferase.